The chain runs to 236 residues: Small ribosomal subunit protein uS2 (236 aa).

The protein belongs to the universal ribosomal protein uS2 family.

The chain is Small ribosomal subunit protein uS2 from Brevibacillus brevis (strain 47 / JCM 6285 / NBRC 100599).